Here is a 488-residue protein sequence, read N- to C-terminus: PTS system mannitol-specific EIICB component (488 aa).

The Cytoplasmic portion of the chain corresponds to 1–26 (MRKKLAKVKVHIQSLDSLLSSMTMPI). The PTS EIIC type-2 domain maps to 15-362 (LDSLLSSMTM…LSLTRKKQLK (348 aa)). The chain crosses the membrane as a helical span at residues 27–48 (IGIFIAWGLLASFFIPSGWTPD). The Extracellular segment spans residues 49–52 (KNLA). A helical membrane pass occupies residues 53 to 73 (LMVGIGIQYVIPTIIXFFGGK). The Cytoplasmic portion of the chain corresponds to 74–147 (KIYEIRGGVI…SGFEMLVNNF (74 aa)). The chain crosses the membrane as a helical span at residues 148–169 (YLGFLGFALIFPSFYLSIYLIG). Residues 170 to 178 (YIQLGLKLL) lie on the Extracellular side of the membrane. Residues 179-199 (VEIMQQYKLYPIAAIVIEPAK) traverse the membrane as a helical segment. Residues 200-289 (VLFLNNAINH…VLLKPVLILA (90 aa)) lie on the Cytoplasmic side of the membrane. Residues 290-309 (TIAVGVVGNGILQIFNAGTI) traverse the membrane as a helical segment. Over 310-331 (APVSPGSVIAGFLQINKTPLDV) the chain is Extracellular. Residues 332–353 (AGYALALVLSAVTSLLISLLLL) form a helical membrane-spanning segment. The Cytoplasmic portion of the chain corresponds to 354–488 (SLTRKKQLKT…IIEKIKNEKN (135 aa)). One can recognise a PTS EIIB type-2 domain in the interval 397–488 (SQVTFVCDAG…IIEKIKNEKN (92 aa)). Catalysis depends on Cys403, which acts as the Phosphocysteine intermediate; for EIIB activity. Cys403 carries the post-translational modification Phosphocysteine; by EIIA.

In terms of assembly, homodimer.

The protein resides in the cell membrane. The catalysed reaction is D-mannitol(out) + N(pros)-phospho-L-histidyl-[protein] = D-mannitol 1-phosphate(in) + L-histidyl-[protein]. The phosphoenolpyruvate-dependent sugar phosphotransferase system (sugar PTS), a major carbohydrate active transport system, catalyzes the phosphorylation of incoming sugar substrates concomitantly with their translocation across the cell membrane. The enzyme II CmtAB PTS system is involved in D-mannitol transport. This chain is PTS system mannitol-specific EIICB component (mtlA), found in Mycoplasma pneumoniae (strain ATCC 29342 / M129 / Subtype 1) (Mycoplasmoides pneumoniae).